Consider the following 548-residue polypeptide: MKKVTAMLFSMAVGLNAVSMAAKVKASEEQETDVLLIGGGIMSATLGTYLRELEPEWSMTMVERLEGVAQESSNGWNNAGTGHSALMELNYTPQNVDGSISIEKAVAINEAFQISRQFWAHQVERGVLRTPRSFINTVPHMSFVWGEDNVNFLRARYAALQQSSLFRGMRYSEDHAQIKEWAPLVMEGRDPQQKVAATRTEIGTDVNYGEITRQLIASLQKKSNFSLQLSSEVRALKRNDDNSWTVTVADLKNGTAQNIRAKFVFIGAGGAALKLLQESGIPEAKDYAGFPVGGQFLVSENPDVVNHHLAKVYGKASVGAPPMSVPHIDTRVLDGKRVVLFGPFATFSTKFLKNGSLWDLMSSTTTSNVMPMMHVGLDNFDLVKYLVSQVMLSEEDRFEALKEYYPQAKKEDWRLWQAGQRVQIIKRDADKGGVLRLGTEVVSDQQGTIAALLGASPGASTAAPIMLNLLEKVFGDRVSSPQWQATLKAIVPSYGRKLNGDVAATERELQYTSEVLGLKYDKPQAVDSTPKPQLKPQLVQKEVADIAL.

Belongs to the MQO family. It depends on FAD as a cofactor.

The enzyme catalyses (S)-malate + a quinone = a quinol + oxaloacetate. It participates in carbohydrate metabolism; tricarboxylic acid cycle; oxaloacetate from (S)-malate (quinone route): step 1/1. The chain is Probable malate:quinone oxidoreductase from Escherichia coli O127:H6 (strain E2348/69 / EPEC).